The primary structure comprises 220 residues: DNA replication complex GINS protein SLD5 (220 aa).

The protein belongs to the GINS4/SLD5 family. In terms of assembly, component of the GINS complex. Interacts with EOL1 in the nucleus.

It localises to the nucleus. In terms of biological role, the GINS complex plays an essential role in the initiation of DNA replication. Required during embryogenesis. The chain is DNA replication complex GINS protein SLD5 from Arabidopsis thaliana (Mouse-ear cress).